Here is a 1099-residue protein sequence, read N- to C-terminus: 1-phosphatidylinositol 4,5-bisphosphate phosphodiesterase 1 (1099 aa).

Residues 1–10 (MLESLNRRNS) are compositionally biased toward basic and acidic residues. Disordered regions lie at residues 1-109 (MLES…SSTT) and 128-164 (ESRS…KSIQ). Composition is skewed to low complexity over residues 43–66 (PPKS…KSDL) and 86–109 (PKQQ…SSTT). Over residues 131-141 (SIVSNNGGSPM) the composition is skewed to polar residues. The segment covering 142 to 155 (SDSTTVTSTLSTDT) has biased composition (low complexity). In terms of domain architecture, PI-PLC X-box spans 566-726 (YDYPLNEYFI…LKHKFIIKVK (161 aa)). Residues H579 and H642 contribute to the active site. Substrate contacts are provided by K724 and K726. Residues 742–780 (FTTSTTTTTTTTTTTTTATSLSEDNENNKSNSSSTSSFI) form a disordered region. Residues 743-778 (TTSTTTTTTTTTTTTTATSLSEDNENNKSNSSSTSS) are compositionally biased toward low complexity. One can recognise a PI-PLC Y-box domain in the interval 794 to 912 (ELSNLGIYTQ…GYVLKPSVLR (119 aa)). 2 residues coordinate substrate: S823 and R852. A C2 domain is found at 917-1071 (KSSSSNVDTR…QGYRYIYLND (155 aa)).

It carries out the reaction a 1,2-diacyl-sn-glycero-3-phospho-(1D-myo-inositol-4,5-bisphosphate) + H2O = 1D-myo-inositol 1,4,5-trisphosphate + a 1,2-diacyl-sn-glycerol + H(+). The production of the second messenger molecules diacylglycerol (DAG) and inositol 1,4,5-trisphosphate (IP3) is mediated by activated phosphatidylinositol-specific phospholipase C enzymes. This Candida albicans (Yeast) protein is 1-phosphatidylinositol 4,5-bisphosphate phosphodiesterase 1 (PLC1).